We begin with the raw amino-acid sequence, 207 residues long: MLHHNQMVLMGLLNMLKISIQERQFVYSWICSLLSKELTQDQLAHYQRGDFDSLFAFLKELGFTEQTEQLIATLRPMEFQQLELAADFAHTFLLEGNISAIPYMSAYLQGEELGVALNLVDQWMTHYQLGVNREQNEPSDHVSVLLAILIRLIGEQPFHVQQDFAQKALLNWLPEFVRKANNTSCETKFYAMLCNLFLAFMTEDFAV.

This sequence belongs to the TorD/DmsD family. TorD subfamily.

Its subcellular location is the cytoplasm. Its function is as follows. Involved in the biogenesis of TorA. Acts on TorA before the insertion of the molybdenum cofactor and, as a result, probably favors a conformation of the apoenzyme that is competent for acquiring the cofactor. This Aggregatibacter aphrophilus (strain NJ8700) (Haemophilus aphrophilus) protein is Chaperone protein TorD.